We begin with the raw amino-acid sequence, 120 residues long: Large ribosomal subunit protein uL18 (120 aa).

It belongs to the universal ribosomal protein uL18 family. As to quaternary structure, part of the 50S ribosomal subunit; part of the 5S rRNA/L5/L18/L25 subcomplex. Contacts the 5S and 23S rRNAs.

In terms of biological role, this is one of the proteins that bind and probably mediate the attachment of the 5S RNA into the large ribosomal subunit, where it forms part of the central protuberance. The chain is Large ribosomal subunit protein uL18 from Clostridium novyi (strain NT).